The primary structure comprises 311 residues: MILRRTLPRLASAKDGSGGGFADGHFPSLRGHPAARANARDAAEKQAALAAKEEEIRDHRRGDAAAASPAPSTVKEFRVYRWSPDAPSRRPHLQSYHVDLATCGPMVLDVLQKIKAEHDATLAFRRSCREGICGSCSMCIDGVNTVACLRPVDTDTSSATTVTPLPHMYVVRDLVVDLTSFYQQYKSVEPWLKRKTKTKTETTEHAQSPEERKRLDGLYECILCACCSAACPSYWWNAEAFLGPAALLHAYRWVSDSRDEYAAERVQALAEGWDKLYRCRMIKSCTATCPKSLDPAAAISAMKTLHQLGKP.

The transit peptide at 1-63 directs the protein to the mitochondrion; it reads MILRRTLPRL…EEIRDHRRGD (63 aa). The segment at 1–70 is disordered; it reads MILRRTLPRL…RGDAAAASPA (70 aa). Basic and acidic residues predominate over residues 51–63; the sequence is AKEEEIRDHRRGD. Positions 77-168 constitute a 2Fe-2S ferredoxin-type domain; sequence FRVYRWSPDA…ATTVTPLPHM (92 aa). 3 residues coordinate [2Fe-2S] cluster: Cys-128, Cys-133, and Cys-148. The 4Fe-4S ferredoxin-type domain maps to 211 to 241; it reads ERKRLDGLYECILCACCSAACPSYWWNAEAF. Residues Cys-221, Cys-224, and Cys-227 each contribute to the [4Fe-4S] cluster site. Residue Cys-231 participates in [3Fe-4S] cluster binding. A ubiquinone is bound at residue Trp-236. Residues Cys-279 and Cys-285 each contribute to the [3Fe-4S] cluster site. Cys-289 is a [4Fe-4S] cluster binding site.

The protein belongs to the succinate dehydrogenase/fumarate reductase iron-sulfur protein family. As to quaternary structure, component of complex II composed of eight subunits in plants: four classical SDH subunits SDH1, SDH2, SDH3 and SDH4 (a flavoprotein (FP), an iron-sulfur protein (IP), and a cytochrome b composed of a large and a small subunit.), as well as four subunits unknown in mitochondria from bacteria and heterotrophic eukaryotes. [2Fe-2S] cluster is required as a cofactor. [3Fe-4S] cluster serves as cofactor. Requires [4Fe-4S] cluster as cofactor.

It localises to the mitochondrion inner membrane. It catalyses the reaction a quinone + succinate = fumarate + a quinol. The protein operates within carbohydrate metabolism; tricarboxylic acid cycle; fumarate from succinate (eukaryal route): step 1/1. Its function is as follows. Iron-sulfur protein (IP) subunit of succinate dehydrogenase (SDH) that is involved in complex II of the mitochondrial electron transport chain and is responsible for transferring electrons from succinate to ubiquinone (coenzyme Q). This is Succinate dehydrogenase [ubiquinone] iron-sulfur subunit 2, mitochondrial from Oryza sativa subsp. japonica (Rice).